The sequence spans 290 residues: UPF0761 membrane protein YihY (290 aa).

6 consecutive transmembrane segments (helical) span residues 44–64 (LLSL…FPMF), 104–124 (VGAC…DSAL), 140–160 (FAVY…SLAI), 183–203 (IFPL…VPTI), 210–230 (AIVG…GFAL), and 244–264 (VLAV…IVLL).

It belongs to the UPF0761 family.

It is found in the cell inner membrane. This Escherichia fergusonii (strain ATCC 35469 / DSM 13698 / CCUG 18766 / IAM 14443 / JCM 21226 / LMG 7866 / NBRC 102419 / NCTC 12128 / CDC 0568-73) protein is UPF0761 membrane protein YihY.